A 322-amino-acid chain; its full sequence is Pilin gene-inverting protein (322 aa).

May be the site-specific invertase required for pilin gene inversion. Moraxella can express either a Q or I pilin; the inversion of 2 kb of DNA determines which pilin is expressed. The protein is Pilin gene-inverting protein (piv) of Moraxella bovis.